The chain runs to 185 residues: Ribosome-recycling factor (185 aa).

The protein belongs to the RRF family.

It localises to the cytoplasm. Responsible for the release of ribosomes from messenger RNA at the termination of protein biosynthesis. May increase the efficiency of translation by recycling ribosomes from one round of translation to another. This chain is Ribosome-recycling factor, found in Novosphingobium aromaticivorans (strain ATCC 700278 / DSM 12444 / CCUG 56034 / CIP 105152 / NBRC 16084 / F199).